The sequence spans 596 residues: Beta-glucuronidase (596 aa).

D-glucuronate is bound by residues aspartate 168 and asparagine 412. Glutamate 413 functions as the Proton donor in the catalytic mechanism. Residues asparagine 464, tyrosine 470, glutamate 502, tryptophan 547, and lysine 566 each contribute to the D-glucuronate site. Glutamate 502 serves as the catalytic Nucleophile. Positions 564 to 566 (NKK) match the N-K motif motif.

It belongs to the glycosyl hydrolase 2 family.

It is found in the cytoplasm. It catalyses the reaction a beta-D-glucuronoside + H2O = D-glucuronate + an alcohol. Functionally, displays beta-glucuronidase activity with the artificial substrate p-nitrophenyl-beta-D-glucuronide (PNPG). Is probably involved in the metabolism of oligosaccharides containing the 3-O-beta-D-glucopyranosyl-beta-D-glucuronide structure released from bacterial and plant acidic carbohydrates. The sequence is that of Beta-glucuronidase from Paenibacillus borealis.